The following is a 202-amino-acid chain: Small ribosomal subunit protein uS4c (202 aa).

The 64-residue stretch at 90–153 folds into the S4 RNA-binding domain; the sequence is MRLDNVTFRL…KSETIISKNI (64 aa).

Belongs to the universal ribosomal protein uS4 family. As to quaternary structure, part of the 30S ribosomal subunit. Contacts protein S5. The interaction surface between S4 and S5 is involved in control of translational fidelity.

It is found in the plastid. Its subcellular location is the chloroplast. In terms of biological role, one of the primary rRNA binding proteins, it binds directly to 16S rRNA where it nucleates assembly of the body of the 30S subunit. With S5 and S12 plays an important role in translational accuracy. In Hypnum cupressiforme (Cypress-leaved plait-moss), this protein is Small ribosomal subunit protein uS4c (rps4).